A 1863-amino-acid polypeptide reads, in one-letter code: Transient receptor potential cation channel subfamily M member 7 (1863 aa).

Met-1 carries the N-acetylmethionine modification. Topologically, residues Met-1–His-850 are cytoplasmic. At Ser-101 the chain carries Phosphoserine. Over residues Asn-544–Thr-555 the composition is skewed to low complexity. The segment at Asn-544–Lys-574 is disordered. Over residues Lys-560–Glu-573 the composition is skewed to basic and acidic residues. The chain crosses the membrane as a helical span at residues Ala-851–Val-876. At Lys-877–Pro-882 the chain is on the extracellular side. The helical transmembrane segment at Ser-883 to Val-904 threads the bilayer. Topologically, residues Phe-905–Tyr-923 are cytoplasmic. A helical membrane pass occupies residues Phe-924 to Phe-943. Residues Gly-944–His-956 are Extracellular-facing. The helical transmembrane segment at Val-957 to Leu-980 threads the bilayer. Over Ala-981 to Asn-999 the chain is Cytoplasmic. Residues Met-1000–Tyr-1023 form a helical membrane-spanning segment. Topologically, residues Pro-1024–His-1025 are extracellular. An intramembrane region (pore-forming) is located at residues Glu-1026 to Cys-1066. Over Gly-1067–Gly-1069 the chain is Extracellular. Residues Thr-1070–Asn-1098 traverse the membrane as a helical segment. Topologically, residues Val-1099–Leu-1863 are cytoplasmic. 3 S-palmitoyl cysteine lipidation sites follow: Cys-1143, Cys-1144, and Cys-1146. A Phosphothreonine modification is found at Thr-1163. A phosphoserine mark is found at Ser-1191, Ser-1193, Ser-1224, Ser-1255, and Ser-1258. The stretch at Arg-1198–Thr-1250 forms a coiled coil. Position 1265 is a phosphothreonine (Thr-1265). A phosphoserine mark is found at Ser-1300, Ser-1357, Ser-1360, Ser-1385, Ser-1386, Ser-1389, Ser-1394, Ser-1395, and Ser-1403. Positions Asn-1380–Thr-1418 are disordered. Residues Ser-1385–Pro-1397 are compositionally biased toward low complexity. Positions Thr-1398 to Cys-1410 are enriched in polar residues. Residue Thr-1404 is modified to Phosphothreonine. Residues Ser-1406 and Ser-1445 each carry the phosphoserine modification. Thr-1454 is modified (phosphothreonine). Ser-1455 bears the Phosphoserine mark. A phosphothreonine mark is found at Thr-1466 and Thr-1470. Phosphoserine is present on residues Ser-1491, Ser-1498, Ser-1502, Ser-1511, Ser-1525, and Ser-1531. The tract at residues Ser-1498–Leu-1539 is disordered. The segment covering Trp-1519 to Pro-1530 has biased composition (basic and acidic residues). Thr-1535 is subject to Phosphothreonine. A Phosphoserine modification is found at Ser-1541. Thr-1549 is modified (phosphothreonine). A phosphoserine mark is found at Ser-1565 and Ser-1567. Phosphothreonine is present on Thr-1581. Positions Ile-1592–Leu-1822 constitute an Alpha-type protein kinase domain. Residues Ser-1596 and Ser-1613 each carry the phosphoserine modification. ADP contacts are provided by Gly-1619, Gly-1620, Leu-1621, Arg-1622, and Lys-1646. Ser-1658 is modified (phosphoserine). Thr-1683 is modified (phosphothreonine). Residues Glu-1718, Glu-1719, and Met-1721 each contribute to the ADP site. His-1751 lines the Zn(2+) pocket. Asp-1765 serves as the catalytic Proton acceptor. Asp-1775 is a binding site for ADP. Ser-1777 carries the post-translational modification Phosphoserine. 3 residues coordinate Zn(2+): His-1808, Cys-1810, and Cys-1814. Position 1828 is a phosphothreonine (Thr-1828). The segment at Glu-1838–Leu-1863 is disordered. The span at Asp-1841–Leu-1863 shows a compositional bias: polar residues. A phosphoserine mark is found at Ser-1846, Ser-1849, and Ser-1858.

It in the C-terminal section; belongs to the protein kinase superfamily. Alpha-type protein kinase family. ALPK subfamily. This sequence in the N-terminal section; belongs to the transient receptor (TC 1.A.4) family. LTrpC subfamily. TRPM7 sub-subfamily. As to quaternary structure, homodimer. Homotetramer. Forms heteromers with TRPM6; heteromeric channels are functionally different from the homomeric channels. Interacts with PLCB1. Zn(2+) is required as a cofactor. Post-translationally, palmitoylated; palmitoylation at Cys-1143, Cys-1144 and Cys-1146 promotes TRPM7 trafficking from the Golgi to the surface membrane. In terms of processing, autophosphorylated; autophosphorylation regulates TRPM7 kinase activity towards its substrates. The C-terminal kinase domain can be cleaved from the channel segment in a cell-type-specific fashion. TRPM7 is cleaved by caspase-8, dissociating the kinase from the ion-conducting pore. The cleaved kinase fragments (M7CKs) can translocate to the cell nucleus and binds chromatin-remodeling complex proteins in a Zn(2+)-dependent manner to ultimately phosphorylate specific Ser/Thr residues of histones. In terms of tissue distribution, found to be expressed in brain and skeletal muscle, with stronger signals in kidney, heart, liver and spleen.

Its subcellular location is the cell membrane. The protein resides in the cytoplasmic vesicle membrane. It localises to the nucleus. It catalyses the reaction L-seryl-[protein] + ATP = O-phospho-L-seryl-[protein] + ADP + H(+). The enzyme catalyses L-threonyl-[protein] + ATP = O-phospho-L-threonyl-[protein] + ADP + H(+). The catalysed reaction is Mg(2+)(in) = Mg(2+)(out). It carries out the reaction Ca(2+)(in) = Ca(2+)(out). It catalyses the reaction Zn(2+)(in) = Zn(2+)(out). Its activity is regulated as follows. Channel displays constitutive activity. Channel activity is negatively regulated by cytosolic Mg(2+), Mg-ATP and low intracellular pH. Resting free cytosolic Mg(2+) and Mg-ATP concentrations seem to be sufficient to block native TRPM7 channel activity. TRPM7 channel activity is highly dependent on membrane levels of phosphatidylinositol 4,5 bisphosphate (PIP2). PIP2 hydrolysis negatively regulates TRPM7 channel activity. TRPM7 kinase activity does not affect channel activity. The kinase activity is controlled through the autophosphorylation of a serine/threonine-rich region located N-terminal to the catalytic domain. Bifunctional protein that combines an ion channel with an intrinsic kinase domain, enabling it to modulate cellular functions either by conducting ions through the pore or by phosphorylating downstream proteins via its kinase domain. The channel is highly permeable to divalent cations, specifically calcium (Ca2+), magnesium (Mg2+) and zinc (Zn2+) and mediates their influx. Controls a wide range of biological processes such as Ca2(+), Mg(2+) and Zn(2+) homeostasis, vesicular Zn(2+) release channel and intracellular Ca(2+) signaling, embryonic development, immune responses, cell motility, proliferation and differentiation. The C-terminal alpha-kinase domain autophosphorylates cytoplasmic residues of TRPM7. TRPM7 phosphorylates SMAD2, suggesting that TRPM7 kinase may play a role in activating SMAD signaling pathways. In vitro, TRPM7 kinase phosphorylates ANXA1 (annexin A1), myosin II isoforms and a variety of proteins with diverse cellular functions. Functionally, the cleaved channel exhibits substantially higher current and potentiates Fas receptor signaling. In terms of biological role, the C-terminal kinase domain can be cleaved from the channel segment in a cell-type-specific fashion. In immune cells, the TRPM7 kinase domain is clipped from the channel domain by caspases in response to Fas-receptor stimulation. The cleaved kinase fragments can translocate to the nucleus, and bind chromatin-remodeling complex proteins in a Zn(2+)-dependent manner to ultimately phosphorylate specific Ser/Thr residues of histones known to be functionally important for cell differentiation and embryonic development. The protein is Transient receptor potential cation channel subfamily M member 7 (Trpm7) of Mus musculus (Mouse).